The following is a 581-amino-acid chain: Spastin (581 aa).

Residues 1–12 (MSSPAGRRKKKG) show a composition bias toward basic residues. The disordered stretch occupies residues 1–39 (MSSPAGRRKKKGSGGASPAPARPPPPAAVPAPAAGPAPA). The tract at residues 1 to 48 (MSSPAGRRKKKGSGGASPAPARPPPPAAVPAPAAGPAPAPGSPHKRNL) is required for nuclear localization. The Cytoplasmic segment spans residues 1–54 (MSSPAGRRKKKGSGGASPAPARPPPPAAVPAPAAGPAPAPGSPHKRNLYYFSYP). Positions 1–78 (MSSPAGRRKK…LGLLFVWLCQ (78 aa)) are required for interaction with ATL1. The tract at residues 1–191 (MSSPAGRRKK…LVMAKDRLQL (191 aa)) is required for midbody localization. A required for interaction with RTN1 region spans residues 1 to 265 (MSSPAGRRKK…GTSKPNRTNK (265 aa)). The Nuclear localization signal signature appears at 4–11 (PAGRRKKK). Pro residues predominate over residues 20-39 (PARPPPPAAVPAPAAGPAPA). A required for interaction with SSNA1 and microtubules region spans residues 48–85 (LYYFSYPLVVGFALLRLLACHLGLLFVWLCQRFSRALM). The segment at residues 55–75 (LVVGFALLRLLACHLGLLFVW) is an intramembrane region (helical). The short motif at 57–65 (VGFALLRLL) is the Nuclear export signal element. Topologically, residues 76 to 581 (LCQRFSRALM…WNKDFGDTTV (506 aa)) are cytoplasmic. The disordered stretch occupies residues 90 to 111 (SSGTAPAPASPSTPAPGPGGEA). A compositionally biased stretch (pro residues) spans 97–106 (PASPSTPAPG). The 75-residue stretch at 118 to 192 (HKQAFEYISI…VMAKDRLQLL (75 aa)) folds into the MIT domain. Residues 193–581 (ESGAVPKKKD…WNKDFGDTTV (389 aa)) form a sufficient for microtubule severing region. The tract at residues 195–277 (GAVPKKKDPL…TPTTAVRKKK (83 aa)) is disordered. Polar residues predominate over residues 206-225 (HASNSLPRSKTVMKSGSTGL). Phosphoserine is present on residues Ser-210 and Ser-233. The segment at 235 to 293 (SGLSMVSGARPGSGPAATTHKGTSKPNRTNKPSTPTTAVRKKKDLKNFRNVDSNLANLI) is required for interaction with microtubules and microtubule severing. A compositionally biased stretch (polar residues) spans 254–271 (HKGTSKPNRTNKPSTPTT). At Thr-271 the chain carries Phosphothreonine. The Nuclear localization signal motif lies at 274-277 (RKKK). 347-354 (GPPGNGKT) contacts ATP. Ser-562 bears the Phosphoserine mark.

Belongs to the AAA ATPase family. Spastin subfamily. As to quaternary structure, homohexamer. Mostly monomeric, but assembles into hexameric structure for short periods of time. Oligomerization seems to be a prerequisite for catalytic activity. Binding to ATP in a cleft between two adjacent subunits stabilizes the homohexameric form. Binds to microtubules at least in part via the alpha-tubulin and beta-tubulin tails. The hexamer adopts a ring conformation through which microtubules pass prior to being severed. Does not interact strongly with tubulin heterodimers. Interacts (via MIT domain) with CHMP1B; the interaction is direct. Interacts with SSNA1. Interacts with ATL1. Interacts with RTN1. Interacts with ZFYVE27. Interacts with REEP1. Interacts (via MIT domain) with IST1.

Its subcellular location is the membrane. It is found in the endoplasmic reticulum. The protein resides in the midbody. It localises to the cytoplasm. The protein localises to the cytoskeleton. Its subcellular location is the microtubule organizing center. It is found in the centrosome. The protein resides in the perinuclear region. It localises to the nucleus. The protein localises to the spindle. Its subcellular location is the cell projection. It is found in the axon. The enzyme catalyses n ATP + n H2O + a microtubule = n ADP + n phosphate + (n+1) alpha/beta tubulin heterodimers.. With respect to regulation, allosteric enzyme with a cooperative mechanism; at least two neighbor subunits influence each other strongly in spastin hexamers. Microtubule binding promotes cooperative interactions among spastin subunits. Its function is as follows. ATP-dependent microtubule severing protein that specifically recognizes and cuts microtubules that are polyglutamylated. Preferentially recognizes and acts on microtubules decorated with short polyglutamate tails: severing activity increases as the number of glutamates per tubulin rises from one to eight, but decreases beyond this glutamylation threshold. Severing activity is not dependent on tubulin acetylation or detyrosination. Microtubule severing promotes reorganization of cellular microtubule arrays and the release of microtubules from the centrosome following nucleation. It is critical for the biogenesis and maintenance of complex microtubule arrays in axons, spindles and cilia. SPAST is involved in abscission step of cytokinesis and nuclear envelope reassembly during anaphase in cooperation with the ESCRT-III complex. Recruited at the midbody, probably by IST1, and participates in membrane fission during abscission together with the ESCRT-III complex. Recruited to the nuclear membrane by IST1 and mediates microtubule severing, promoting nuclear envelope sealing and mitotic spindle disassembly during late anaphase. Required for membrane traffic from the endoplasmic reticulum (ER) to the Golgi and endosome recycling. Recruited by IST1 to endosomes and regulates early endosomal tubulation and recycling by mediating microtubule severing. Probably plays a role in axon growth and the formation of axonal branches. The sequence is that of Spastin from Rattus norvegicus (Rat).